The following is an 829-amino-acid chain: DNA topoisomerase 1 (829 aa).

Residues 1 to 248 (MSEDHVQNDS…AKGNEEGVKK (248 aa)) are disordered. A compositionally biased stretch (basic residues) spans 22–36 (HKHKKDKEHRHKEHK). Basic and acidic residues-rich tracts occupy residues 37-58 (KDKD…SEKK), 68-159 (KHRE…EKMK), and 193-220 (KENK…DDKK). Interaction with DNA stretches follow at residues 481-482 (KY), 544-549 (RAGNEK), and 641-643 (TAK). In terms of domain architecture, Topo IB-type catalytic spans 488–821 (SSRIKGEKDW…SIWQTTTSNF (334 aa)). Tyrosine 779 (O-(3'-phospho-DNA)-tyrosine intermediate) is an active-site residue.

This sequence belongs to the type IB topoisomerase family. Monomer.

The protein localises to the nucleus. The catalysed reaction is ATP-independent breakage of single-stranded DNA, followed by passage and rejoining.. In terms of biological role, releases the supercoiling and torsional tension of DNA introduced during the DNA replication and transcription by transiently cleaving and rejoining one strand of the DNA duplex. Introduces a single-strand break via transesterification at a target site in duplex DNA. The scissile phosphodiester is attacked by the catalytic tyrosine of the enzyme, resulting in the formation of a DNA-(3'-phosphotyrosyl)-enzyme intermediate and the expulsion of a 5'-OH DNA strand. TThe free DNA strand then rotates around the intact phosphodiester bond on the opposing strand, thus removing DNA supercoils. Finally, in the religation step, the DNA 5'-OH attacks the covalent intermediate to expel the active-site tyrosine and restore the DNA phosphodiester backbone. May play a role in the circadian transcription of the core circadian clock component BMAL1. The polypeptide is DNA topoisomerase 1 (top1) (Xenopus laevis (African clawed frog)).